We begin with the raw amino-acid sequence, 154 residues long: Endoribonuclease YbeY (154 aa).

Zn(2+) is bound by residues histidine 114, histidine 118, and histidine 124.

The protein belongs to the endoribonuclease YbeY family. Zn(2+) is required as a cofactor.

The protein localises to the cytoplasm. Functionally, single strand-specific metallo-endoribonuclease involved in late-stage 70S ribosome quality control and in maturation of the 3' terminus of the 16S rRNA. This is Endoribonuclease YbeY from Haemophilus influenzae (strain PittEE).